The primary structure comprises 119 residues: Large ribosomal subunit protein uL22 (119 aa).

The protein belongs to the universal ribosomal protein uL22 family. Part of the 50S ribosomal subunit.

In terms of biological role, this protein binds specifically to 23S rRNA; its binding is stimulated by other ribosomal proteins, e.g. L4, L17, and L20. It is important during the early stages of 50S assembly. It makes multiple contacts with different domains of the 23S rRNA in the assembled 50S subunit and ribosome. Its function is as follows. The globular domain of the protein is located near the polypeptide exit tunnel on the outside of the subunit, while an extended beta-hairpin is found that lines the wall of the exit tunnel in the center of the 70S ribosome. The polypeptide is Large ribosomal subunit protein uL22 (Rickettsia bellii (strain OSU 85-389)).